A 504-amino-acid chain; its full sequence is MEEFQGYLELDKSRQHDFLYPLIFQEYIYALAHDHGLNRSILLENVGYDNKSSSLIVKRLITRMYQQNHLIISVNDSNQNPFLGHNKNLYSQMISEGFAVIVEIPFSLRSVSSLEGKEIVQSHNLRSIHSIFPFLEDKFLHLNYVSDILIPHPIHLEILVQTLRYWVKDASSLHLLRFFFYEYYNWNSLITPKKSISIFSKRNQRLFLFLYNSHVCEYESIFLFFRNQSSYLRSTSSGALLERIYFYGKIKHLVEVFVNDFQAILWLFKDPFMHYVRYQGKSILASKGTPLLMNKWKYYLVNFWQCHFYVWSQPGRIYINQLSNHSFDFLGYLSSVGLNPSVVRSQMLENSFIIDNAIKKFDIIVPIIPLIGSLAKAKFCNVLGHPISKPARADSSDSDIIDRFVRICRNLSHYHSGSSKKKSLYRIKYILRLSCARTLARKHKSTVRAFLKRLGSGLLEEFLTEEEQVLSLIFPKASSTSRRLYRGRIWYFDIISINDLANYE.

It belongs to the intron maturase 2 family. MatK subfamily.

Its subcellular location is the plastid. It localises to the chloroplast. Its function is as follows. Usually encoded in the trnK tRNA gene intron. Probably assists in splicing its own and other chloroplast group II introns. The sequence is that of Maturase K from Hamamelis virginiana (Witch-hazel).